We begin with the raw amino-acid sequence, 142 residues long: Large ribosomal subunit protein cL37 alpha (142 aa).

The transit peptide at 1–62 (MALLSPLLSL…AQKRGTVVAM (62 aa)) directs the protein to the chloroplast. Positions 123 to 142 (RKLRKRGAWPPSKMKKLKNV) are disordered.

It belongs to the chloroplast-specific ribosomal protein cL37 family. In terms of assembly, component of the chloroplast large ribosomal subunit (LSU). Mature 70S chloroplast ribosomes of higher plants consist of a small (30S) and a large (50S) subunit. The 30S small subunit contains 1 molecule of ribosomal RNA (16S rRNA) and 24 different proteins. The 50S large subunit contains 3 rRNA molecules (23S, 5S and 4.5S rRNA) and 33 different proteins.

It is found in the plastid. Its subcellular location is the chloroplast. In terms of biological role, component of the chloroplast ribosome (chloro-ribosome), a dedicated translation machinery responsible for the synthesis of chloroplast genome-encoded proteins, including proteins of the transcription and translation machinery and components of the photosynthetic apparatus. This Spinacia oleracea (Spinach) protein is Large ribosomal subunit protein cL37 alpha (PSRP5).